Consider the following 168-residue polypeptide: Large ribosomal subunit protein uL10 (168 aa).

The protein belongs to the universal ribosomal protein uL10 family. In terms of assembly, part of the ribosomal stalk of the 50S ribosomal subunit. The N-terminus interacts with L11 and the large rRNA to form the base of the stalk. The C-terminus forms an elongated spine to which L12 dimers bind in a sequential fashion forming a multimeric L10(L12)X complex.

Its function is as follows. Forms part of the ribosomal stalk, playing a central role in the interaction of the ribosome with GTP-bound translation factors. This chain is Large ribosomal subunit protein uL10, found in Levilactobacillus brevis (strain ATCC 367 / BCRC 12310 / CIP 105137 / JCM 1170 / LMG 11437 / NCIMB 947 / NCTC 947) (Lactobacillus brevis).